The sequence spans 399 residues: Glycerol-1-phosphate dehydrogenase [NAD(P)+] (399 aa).

NAD(+) is bound by residues Asp-56, 118-122, and 140-143; these read GTIHD and TAPS. Residue Asp-145 participates in substrate binding. Ser-149 provides a ligand contact to NAD(+). Asp-192 contributes to the substrate binding site. Ni(2+) contacts are provided by Asp-192 and His-272. A substrate-binding site is contributed by His-276. His-292 serves as a coordination point for Ni(2+).

The protein belongs to the glycerol-1-phosphate dehydrogenase family. As to quaternary structure, homodimer. It depends on Ni(2+) as a cofactor.

It localises to the cytoplasm. It catalyses the reaction sn-glycerol 1-phosphate + NAD(+) = dihydroxyacetone phosphate + NADH + H(+). It carries out the reaction sn-glycerol 1-phosphate + NADP(+) = dihydroxyacetone phosphate + NADPH + H(+). Its function is as follows. Catalyzes the NAD(P)H-dependent reduction of dihydroxyacetonephosphate (DHAP or glycerone phosphate) to glycerol 1-phosphate (G1P). The G1P thus generated is probably used for the synthesis of phosphoglycerolipids in Gram-positive bacterial species. This is Glycerol-1-phosphate dehydrogenase [NAD(P)+] from Halalkalibacterium halodurans (strain ATCC BAA-125 / DSM 18197 / FERM 7344 / JCM 9153 / C-125) (Bacillus halodurans).